The following is a 90-amino-acid chain: Small ribosomal subunit protein bS16 (90 aa).

The protein belongs to the bacterial ribosomal protein bS16 family.

The chain is Small ribosomal subunit protein bS16 from Heliobacterium modesticaldum (strain ATCC 51547 / Ice1).